The sequence spans 325 residues: Alpha-cuprenene synthase COP6 (325 aa).

Mg(2+)-binding residues include Asp102, Glu166, Asn224, Ser228, and Glu232.

The protein belongs to the trichodiene synthase family. Mg(2+) serves as cofactor.

Its function is as follows. Alpha-cuprenene synthase; part of the gene cluster that mediates the biosynthesis of alpha-cuprenene and oxidized derivatives. The alpha-cuprenene synthase COP6 is the only sesquiterpene synthase identified in C.cinereus that appears to be part of a biosynthetic gene cluster and is highly specific since it catalyzes the cyclization of (2E,6E)-farnesyl diphosphate into only one product, alpha-cuprenene. COP6 is also able to perform the cyclization of geranyl diphosphate. The cytochrome P450 monooxygenase COX2 then oxidizes the cyclohexadiene ring of alpha-cuprenene at positions 1 and 4, yielding first alpha-cuparene, followed by alpha-cuparophenol and a further yet unidentified compound resulting from one additional oxidation step. The cytochrome P450 monooxygenase COX1 then likely catalyzes the oxidation at position 9 of the pentane ring of alpha-cuprenene to give the corresponding hydroxy or ketone derivatives. The sequence is that of Alpha-cuprenene synthase COP6 from Coprinopsis cinerea (strain Okayama-7 / 130 / ATCC MYA-4618 / FGSC 9003) (Inky cap fungus).